Reading from the N-terminus, the 287-residue chain is Large ribosomal subunit protein uL2 (287 aa).

A disordered region spans residues 221 to 287 (RGSVMNPCDH…SKRSRGGRDS (67 aa)). The span at 258 to 287 (KTRKRNKPSNRFVLRKRRRVSKRSRGGRDS) shows a compositional bias: basic residues.

It belongs to the universal ribosomal protein uL2 family. Part of the 50S ribosomal subunit. Forms a bridge to the 30S subunit in the 70S ribosome.

Functionally, one of the primary rRNA binding proteins. Required for association of the 30S and 50S subunits to form the 70S ribosome, for tRNA binding and peptide bond formation. It has been suggested to have peptidyltransferase activity; this is somewhat controversial. Makes several contacts with the 16S rRNA in the 70S ribosome. The chain is Large ribosomal subunit protein uL2 from Prochlorococcus marinus (strain SARG / CCMP1375 / SS120).